The sequence spans 61 residues: Small ribosomal subunit protein uS14 (61 aa).

4 residues coordinate Zn(2+): Cys-24, Cys-27, Cys-40, and Cys-43.

The protein belongs to the universal ribosomal protein uS14 family. Zinc-binding uS14 subfamily. In terms of assembly, part of the 30S ribosomal subunit. Contacts proteins S3 and S10. The cofactor is Zn(2+).

Its function is as follows. Binds 16S rRNA, required for the assembly of 30S particles and may also be responsible for determining the conformation of the 16S rRNA at the A site. In Clostridium botulinum (strain ATCC 19397 / Type A), this protein is Small ribosomal subunit protein uS14.